The chain runs to 263 residues: Cell division coordinator CpoB (263 aa).

The signal sequence occupies residues 1–26 (MSSNFRHQLLSLSLLVGIAAPWAAFA). Residues 44 to 88 (QLERISNAHSQLLTQLQQQLSDNQSDIDSLRGQIQENQYQLNQVV) adopt a coiled-coil conformation. Over residues 106–123 (AAAQSTSGDQSGAAASTT) the composition is skewed to low complexity. Residues 106-139 (AAAQSTSGDQSGAAASTTPTADAGTANAGAPVKS) form a disordered region. TPR repeat units lie at residues 143 to 176 (NTDY…YPDS), 180 to 213 (PNAN…YPKS), and 217 to 250 (ADAM…YPGT).

It belongs to the CpoB family. As to quaternary structure, homotrimer. Interacts directly with the central domain of TolA and with PBP1B. Binding to TolA disrupts the homotrimer to form a YbgF/TolA heterodimer with weak affinity. Forms a quaternary complex with PBP1B-LpoB and TolA.

Its subcellular location is the periplasm. Its function is as follows. Mediates coordination of peptidoglycan synthesis and outer membrane constriction during cell division. Promotes physical and functional coordination of the PBP1B-LpoB and Tol machines, and regulates PBP1B activity in response to Tol energy state. The polypeptide is Cell division coordinator CpoB (Escherichia coli (strain K12)).